The following is a 575-amino-acid chain: Flagellin B (575 aa).

Belongs to the bacterial flagellin family. As to quaternary structure, heteromer of flaA and flaB.

It localises to the secreted. The protein localises to the bacterial flagellum. In terms of biological role, flagellin is the subunit protein which polymerizes to form the filaments of bacterial flagella. This chain is Flagellin B (flaB), found in Campylobacter jejuni.